The sequence spans 479 residues: Monodehydroascorbate reductase 1, peroxisomal (479 aa).

Over 1 to 3 (MGR) the chain is Cytoplasmic. The chain crosses the membrane as a helical span at residues 4-24 (AFEYVILGGGVAAGYAALEFV). Residues 12–15 (GGVA), E41, R48, K53, and 147–148 (RN) each bind FAD. Residues 25-445 (RRNGGASSQE…QATGGGGKPT (421 aa)) lie on the Peroxisomal side of the membrane. Residues 172 to 178 (GGYIGME), R202, and G260 contribute to the NAD(+) site. NADP(+) is bound by residues 174–178 (YIGME), R202, and G260. Position 297 (D297) interacts with FAD. 314–315 (EH) serves as a coordination point for NAD(+). 314–315 (EH) lines the NADP(+) pocket. V316 is an FAD binding site. R320 is a binding site for L-ascorbate. Y347 contacts FAD. Y347 contacts NAD(+). Y347 is a binding site for NADP(+). R349 is an L-ascorbate binding site. A helical transmembrane segment spans residues 446–466 (CAWHATVGVAAAVSIAAFACW). Residues 467 to 479 (YGWQAPYVLKRDF) lie on the Cytoplasmic side of the membrane.

Belongs to the FAD-dependent oxidoreductase family. Requires FAD as cofactor.

The protein resides in the peroxisome membrane. It catalyses the reaction 2 monodehydro-L-ascorbate radical + NADH + H(+) = 2 L-ascorbate + NAD(+). Catalyzes the conversion of monodehydroascorbate to ascorbate, oxidizing NADH in the process. Ascorbate is a major antioxidant against reactive oxygen species (ROS) and nitric oxide (NO). This chain is Monodehydroascorbate reductase 1, peroxisomal, found in Oryza sativa subsp. japonica (Rice).